Here is a 208-residue protein sequence, read N- to C-terminus: Putative 3-methyladenine DNA glycosylase (208 aa).

The protein belongs to the DNA glycosylase MPG family.

The polypeptide is Putative 3-methyladenine DNA glycosylase (Lactobacillus delbrueckii subsp. bulgaricus (strain ATCC BAA-365 / Lb-18)).